The sequence spans 432 residues: Anaerobic glycerol-3-phosphate dehydrogenase subunit B (432 aa).

It belongs to the anaerobic G-3-P dehydrogenase subunit B family. As to quaternary structure, composed of a catalytic GlpA/B dimer and of membrane bound GlpC. FMN is required as a cofactor.

It catalyses the reaction a quinone + sn-glycerol 3-phosphate = dihydroxyacetone phosphate + a quinol. It functions in the pathway polyol metabolism; glycerol degradation via glycerol kinase pathway; glycerone phosphate from sn-glycerol 3-phosphate (anaerobic route): step 1/1. Its function is as follows. Conversion of glycerol 3-phosphate to dihydroxyacetone. Uses fumarate or nitrate as electron acceptor. This Haemophilus influenzae (strain ATCC 51907 / DSM 11121 / KW20 / Rd) protein is Anaerobic glycerol-3-phosphate dehydrogenase subunit B (glpB).